Consider the following 189-residue polypeptide: Peptidyl-tRNA hydrolase (189 aa).

Y15 is a tRNA binding site. H20 (proton acceptor) is an active-site residue. Residues F66, N68, and N114 each contribute to the tRNA site.

The protein belongs to the PTH family. In terms of assembly, monomer.

It is found in the cytoplasm. The catalysed reaction is an N-acyl-L-alpha-aminoacyl-tRNA + H2O = an N-acyl-L-amino acid + a tRNA + H(+). In terms of biological role, hydrolyzes ribosome-free peptidyl-tRNAs (with 1 or more amino acids incorporated), which drop off the ribosome during protein synthesis, or as a result of ribosome stalling. Catalyzes the release of premature peptidyl moieties from peptidyl-tRNA molecules trapped in stalled 50S ribosomal subunits, and thus maintains levels of free tRNAs and 50S ribosomes. The chain is Peptidyl-tRNA hydrolase from Streptococcus pyogenes serotype M6 (strain ATCC BAA-946 / MGAS10394).